Here is a 315-residue protein sequence, read N- to C-terminus: Olfactory receptor 56A3 (315 aa).

At 1–29 the chain is on the extracellular side; sequence MTTHRNDTLSTEASDFLLNCFVRSPSWQH. An N-linked (GlcNAc...) asparagine glycan is attached at N6. Residues 30 to 50 form a helical membrane-spanning segment; it reads WLSLPLSLLFLLAVGANTTLL. Residues 51-58 are Cytoplasmic-facing; sequence MTIWLEAS. The helical transmembrane segment at 59–79 threads the bilayer; sequence LHQPLYYLLSLLSLLDIVLCL. The Extracellular portion of the chain corresponds to 80-103; the sequence is TVIPKVLTIFWFDLRPISFPACFL. C101 and C193 are disulfide-bonded. A helical membrane pass occupies residues 104 to 124; that stretch reads QMYIMNCFLAMESCTFMVMAY. Over 125–143 the chain is Cytoplasmic; sequence DRYVAICHPLRYPSIITDH. A helical transmembrane segment spans residues 144-164; that stretch reads FVVKAAMFILTRNVLMTLPIP. The Extracellular segment spans residues 165–200; it reads ILSAQLRYCGRNVIENCICANMSVSRLSCDDVTINH. Residue N185 is glycosylated (N-linked (GlcNAc...) asparagine). The helical transmembrane segment at 201-221 threads the bilayer; sequence LYQFAGGWTLLGSDLILIFLS. Over 222-241 the chain is Cytoplasmic; the sequence is YTFILRAVLRLKAEGAVAKA. Residues 242 to 262 form a helical membrane-spanning segment; it reads LSTCGSHFMLILFFSTILLVF. Over 263–277 the chain is Extracellular; that stretch reads VLTHVAKKKVSPDVP. A helical transmembrane segment spans residues 278–298; it reads VLLNVLHHVIPAALNPIIYGV. The Cytoplasmic portion of the chain corresponds to 299–315; that stretch reads RTQEIKQGMQRLLKKGC.

This sequence belongs to the G-protein coupled receptor 1 family.

It is found in the cell membrane. Functionally, odorant receptor. The chain is Olfactory receptor 56A3 (OR56A3) from Homo sapiens (Human).